Reading from the N-terminus, the 428-residue chain is Peptidase B (428 aa).

Mn(2+) contacts are provided by Lys-195 and Asp-200. Lys-207 is a catalytic residue. Mn(2+) contacts are provided by Asp-218, Asp-277, and Glu-279. Arg-281 is a catalytic residue.

Belongs to the peptidase M17 family. Homohexamer. Requires Mn(2+) as cofactor.

The protein localises to the cytoplasm. The catalysed reaction is Release of an N-terminal amino acid, Xaa, from a peptide or arylamide. Xaa is preferably Glu or Asp but may be other amino acids, including Leu, Met, His, Cys and Gln.. Its function is as follows. Probably plays an important role in intracellular peptide degradation. This is Peptidase B from Klebsiella pneumoniae subsp. pneumoniae (strain ATCC 700721 / MGH 78578).